The sequence spans 425 residues: UDP-N-acetylglucosamine 1-carboxyvinyltransferase (425 aa).

Position 22–23 (22–23) interacts with phosphoenolpyruvate; that stretch reads KN. A UDP-N-acetyl-alpha-D-glucosamine-binding site is contributed by R93. C117 (proton donor) is an active-site residue. A 2-(S-cysteinyl)pyruvic acid O-phosphothioketal modification is found at C117. UDP-N-acetyl-alpha-D-glucosamine-binding positions include 122-126, 162-165, D307, and I329; these read RPVDL and KVSV.

It belongs to the EPSP synthase family. MurA subfamily.

Its subcellular location is the cytoplasm. The catalysed reaction is phosphoenolpyruvate + UDP-N-acetyl-alpha-D-glucosamine = UDP-N-acetyl-3-O-(1-carboxyvinyl)-alpha-D-glucosamine + phosphate. The protein operates within cell wall biogenesis; peptidoglycan biosynthesis. Functionally, cell wall formation. Adds enolpyruvyl to UDP-N-acetylglucosamine. This is UDP-N-acetylglucosamine 1-carboxyvinyltransferase from Pasteurella multocida (strain Pm70).